The sequence spans 165 residues: Large ribosomal subunit protein uL11 (165 aa).

S38 carries the post-translational modification Phosphoserine. K40 participates in a covalent cross-link: Glycyl lysine isopeptide (Lys-Gly) (interchain with G-Cter in SUMO2). K48 is covalently cross-linked (Glycyl lysine isopeptide (Lys-Gly) (interchain with G-Cter in ubiquitin)). Residue K54 is modified to N6-acetyllysine. Residue K83 forms a Glycyl lysine isopeptide (Lys-Gly) (interchain with G-Cter in ubiquitin) linkage. The residue at position 165 (S165) is a Phosphoserine.

Belongs to the universal ribosomal protein uL11 family. In terms of assembly, component of the large ribosomal subunit. Mature ribosomes consist of a small (40S) and a large (60S) subunit. The 40S subunit contains about 33 different proteins and 1 molecule of RNA (18S). The 60S subunit contains about 49 different proteins and 3 molecules of RNA (28S, 5.8S and 5S). Ubiquitinated at Lys-48 and Lys-83 by RNF14 and RNF25 in response to ribosome collisions (ribosome stalling).

Its subcellular location is the cytoplasm. Functionally, component of the large ribosomal subunit. The ribosome is a large ribonucleoprotein complex responsible for the synthesis of proteins in the cell. Binds directly to 26S ribosomal RNA. In Bos taurus (Bovine), this protein is Large ribosomal subunit protein uL11 (RPL12).